Consider the following 324-residue polypeptide: Reaction center protein M chain (324 aa).

Residues 2–51 are Cytoplasmic-facing; the sequence is ADYQTIYTQIQARGPHITVSGEWGDNDRVGKPFYSYWLGKIGDAQIGPIY. The chain crosses the membrane as a helical span at residues 52-76; the sequence is LGASGIAAFAFGSTAILIILFNMAA. Over 77–110 the chain is Periplasmic; that stretch reads EVHFDPLQFFRQFFWLGLYPPKAQYGMGIPPLHD. Residues 111–137 traverse the membrane as a helical segment; sequence GGWWLMAGLFMTLSLGSWWIRVYSRAR. Residues 138–142 lie on the Cytoplasmic side of the membrane; sequence ALGLG. Residues 143-166 form a helical membrane-spanning segment; sequence THIAWNFAAAIFFVLCIGCIHPTL. The Periplasmic portion of the chain corresponds to 167–197; that stretch reads VGSWSEGVPFGIWPHIDWLTAFSIRYGNFYY. Residues His-181 and His-201 each coordinate (7R,8Z)-bacteriochlorophyll b. The helical transmembrane segment at 198 to 223 threads the bilayer; it reads CPWHGFSIGFAYGCGLLFAAHGATIL. His-218 and Glu-233 together coordinate Fe cation. Over 224-259 the chain is Cytoplasmic; sequence AVARFGGDREIEQITDRGTAVERAALFWRWTIGFNA. Trp-251 provides a ligand contact to a ubiquinone. Residues 260–284 traverse the membrane as a helical segment; sequence TIESVHRWGWFFSLMVMVSASVGIL. His-265 is a Fe cation binding site. The Periplasmic portion of the chain corresponds to 285–324; the sequence is LTGTFVDNWYLWCVKHGAAPDYPAYLPATPDPASLPGAPK.

Belongs to the reaction center PufL/M/PsbA/D family. In terms of assembly, reaction center is composed of four bacteriochlorophylls, two bacteriopheophytins, two ubiquinones, one iron, and three highly hydrophobic polypeptide chains (designated L, M, and H).

It is found in the cellular chromatophore membrane. Its function is as follows. The reaction center is a membrane-bound complex that mediates the initial photochemical event in the electron transfer process of photosynthesis. The protein is Reaction center protein M chain (pufM) of Blastochloris viridis (Rhodopseudomonas viridis).